A 427-amino-acid polypeptide reads, in one-letter code: Acetylornithine aminotransferase (427 aa).

Residues 1-23 (MSLQTLIEQATNPPESGSAASSP) are disordered. Residues 124-125 (GA) and F157 contribute to the pyridoxal 5'-phosphate site. R160 contributes to the N(2)-acetyl-L-ornithine binding site. Residue 248–251 (DEVQ) participates in pyridoxal 5'-phosphate binding. K277 carries the N6-(pyridoxal phosphate)lysine modification. S304 serves as a coordination point for N(2)-acetyl-L-ornithine. T305 serves as a coordination point for pyridoxal 5'-phosphate.

This sequence belongs to the class-III pyridoxal-phosphate-dependent aminotransferase family. ArgD subfamily. In terms of assembly, homodimer. Pyridoxal 5'-phosphate serves as cofactor.

It is found in the cytoplasm. The catalysed reaction is N(2)-acetyl-L-ornithine + 2-oxoglutarate = N-acetyl-L-glutamate 5-semialdehyde + L-glutamate. The protein operates within amino-acid biosynthesis; L-arginine biosynthesis; N(2)-acetyl-L-ornithine from L-glutamate: step 4/4. In Nostoc sp. (strain PCC 7120 / SAG 25.82 / UTEX 2576), this protein is Acetylornithine aminotransferase.